The sequence spans 220 residues: ATP-dependent dethiobiotin synthetase BioD (220 aa).

12-17 is an ATP binding site; sequence DVGKTI. Position 16 (threonine 16) interacts with Mg(2+). Lysine 37 is a catalytic residue. Threonine 41 is a binding site for substrate. Residues aspartate 49, 107 to 110, 167 to 168, and 197 to 199 each bind ATP; these read EGAG, GS, and PAG. Mg(2+) is bound by residues aspartate 49 and glutamate 107.

The protein belongs to the dethiobiotin synthetase family. Homodimer. Mg(2+) serves as cofactor.

It localises to the cytoplasm. The enzyme catalyses (7R,8S)-7,8-diammoniononanoate + CO2 + ATP = (4R,5S)-dethiobiotin + ADP + phosphate + 3 H(+). It functions in the pathway cofactor biosynthesis; biotin biosynthesis; biotin from 7,8-diaminononanoate: step 1/2. In terms of biological role, catalyzes a mechanistically unusual reaction, the ATP-dependent insertion of CO2 between the N7 and N8 nitrogen atoms of 7,8-diaminopelargonic acid (DAPA, also called 7,8-diammoniononanoate) to form a ureido ring. This chain is ATP-dependent dethiobiotin synthetase BioD, found in Corynebacterium efficiens (strain DSM 44549 / YS-314 / AJ 12310 / JCM 11189 / NBRC 100395).